The following is a 120-amino-acid chain: Large ribosomal subunit protein bL20 (120 aa).

The protein belongs to the bacterial ribosomal protein bL20 family.

Binds directly to 23S ribosomal RNA and is necessary for the in vitro assembly process of the 50S ribosomal subunit. It is not involved in the protein synthesizing functions of that subunit. The chain is Large ribosomal subunit protein bL20 from Cereibacter sphaeroides (strain ATCC 17029 / ATH 2.4.9) (Rhodobacter sphaeroides).